We begin with the raw amino-acid sequence, 309 residues long: Glutaminase (309 aa).

Substrate is bound by residues serine 65, asparagine 117, glutamate 162, asparagine 169, tyrosine 193, tyrosine 245, and valine 263.

It belongs to the glutaminase family. In terms of assembly, homotetramer.

It carries out the reaction L-glutamine + H2O = L-glutamate + NH4(+). The polypeptide is Glutaminase (Geobacillus thermodenitrificans (strain NG80-2)).